The following is a 1331-amino-acid chain: ABC multidrug transporter MDR2 (1331 aa).

Composition is skewed to basic and acidic residues over residues M1–N20 and S31–N41. Residues M1–E51 form a disordered region. The next 4 membrane-spanning stretches (helical) occupy residues M93–F113, Y147–I167, K219–V239, and W242–I262. Residues A97–S387 form the ABC transmembrane type-1 1 domain. A glycan (N-linked (GlcNAc...) asparagine) is linked at N293. 2 consecutive transmembrane segments (helical) span residues L325–W345 and L358–V378. The 246-residue stretch at I422–A667 folds into the ABC transporter 1 domain. ATP is bound at residue G457–S464. N529 carries an N-linked (GlcNAc...) asparagine glycan. 2 helical membrane passes run L762–F782 and F810–I830. An ABC transmembrane type-1 2 domain is found at G764 to K1051. An N-linked (GlcNAc...) asparagine glycan is attached at N860. Transmembrane regions (helical) follow at residues L884–F904, L910–L930, A995–L1015, and F1025–F1045. An ABC transporter 2 domain is found at I1086–M1324. A glycan (N-linked (GlcNAc...) asparagine) is linked at N1108. Residue G1121–S1128 participates in ATP binding.

Belongs to the ABC transporter superfamily. ABCB family. Multidrug resistance exporter (TC 3.A.1.201) subfamily.

It is found in the cell membrane. The catalysed reaction is itraconazole(in) + ATP + H2O = itraconazole(out) + ADP + phosphate + H(+). Functionally, pleiotropic ABC efflux transporter that may be involved in the modulation susceptibility to a wide range of unrelated cytotoxic compounds, including terbinafine, 4-nitroquinoline N-oxide, and ethidium bromide. May play a role in pathogenicity. This is ABC multidrug transporter MDR2 from Trichophyton interdigitale (strain MR816).